Reading from the N-terminus, the 94-residue chain is Co-chaperonin GroES (94 aa).

This sequence belongs to the GroES chaperonin family. Heptamer of 7 subunits arranged in a ring. Interacts with the chaperonin GroEL.

The protein localises to the cytoplasm. Together with the chaperonin GroEL, plays an essential role in assisting protein folding. The GroEL-GroES system forms a nano-cage that allows encapsulation of the non-native substrate proteins and provides a physical environment optimized to promote and accelerate protein folding. GroES binds to the apical surface of the GroEL ring, thereby capping the opening of the GroEL channel. The chain is Co-chaperonin GroES from Bacillus subtilis (strain 168).